The following is a 429-amino-acid chain: Enolase (429 aa).

Q163 provides a ligand contact to (2R)-2-phosphoglycerate. The Proton donor role is filled by E205. Positions 242, 287, and 314 each coordinate Mg(2+). (2R)-2-phosphoglycerate is bound by residues K339, R368, S369, and K390. The active-site Proton acceptor is K339.

The protein belongs to the enolase family. Mg(2+) is required as a cofactor.

It localises to the cytoplasm. The protein resides in the secreted. Its subcellular location is the cell surface. It carries out the reaction (2R)-2-phosphoglycerate = phosphoenolpyruvate + H2O. Its pathway is carbohydrate degradation; glycolysis; pyruvate from D-glyceraldehyde 3-phosphate: step 4/5. Functionally, catalyzes the reversible conversion of 2-phosphoglycerate (2-PG) into phosphoenolpyruvate (PEP). It is essential for the degradation of carbohydrates via glycolysis. The protein is Enolase of Anaeromyxobacter dehalogenans (strain 2CP-1 / ATCC BAA-258).